We begin with the raw amino-acid sequence, 64 residues long: MPKMKTKSGAAKRFLKTASGYKHKHAFKSHILTKMSTKRKRQLRGSSLIGPSDVAKVERMLRVR.

The protein belongs to the bacterial ribosomal protein bL35 family.

In Ectopseudomonas mendocina (strain ymp) (Pseudomonas mendocina), this protein is Large ribosomal subunit protein bL35.